A 72-amino-acid polypeptide reads, in one-letter code: Translation initiation factor IF-1 (72 aa).

In terms of domain architecture, S1-like spans 1–72 (MAKEGNIEME…SKGRIVYRAR (72 aa)).

It belongs to the IF-1 family. In terms of assembly, component of the 30S ribosomal translation pre-initiation complex which assembles on the 30S ribosome in the order IF-2 and IF-3, IF-1 and N-formylmethionyl-tRNA(fMet); mRNA recruitment can occur at any time during PIC assembly.

It localises to the cytoplasm. Its function is as follows. One of the essential components for the initiation of protein synthesis. Stabilizes the binding of IF-2 and IF-3 on the 30S subunit to which N-formylmethionyl-tRNA(fMet) subsequently binds. Helps modulate mRNA selection, yielding the 30S pre-initiation complex (PIC). Upon addition of the 50S ribosomal subunit IF-1, IF-2 and IF-3 are released leaving the mature 70S translation initiation complex. The sequence is that of Translation initiation factor IF-1 from Hahella chejuensis (strain KCTC 2396).